A 470-amino-acid polypeptide reads, in one-letter code: Aspartate-semialdehyde dehydrogenase 1 (470 aa).

The NAD(+) site is built by T145 and K171. Residue D243 is part of the active site. NAD(+) is bound at residue G245. C277 is a catalytic residue. E371 serves as a coordination point for NAD(+).

This sequence belongs to the aldehyde dehydrogenase family.

The catalysed reaction is L-aspartate 4-semialdehyde + NAD(+) + H2O = L-aspartate + NADH + 2 H(+). Its function is as follows. Dehydrogenase involved in the degradation of canavanine, the delta-oxa-analog of arginine, allowing growth on canavanine as sole nitrogen and carbon source. Probably catalyzes the NAD(+)-dependent oxidation of L-aspartate-semialdehyde to L-aspartate. In Pseudomonas canavaninivorans, this protein is Aspartate-semialdehyde dehydrogenase 1.